The primary structure comprises 273 residues: UPF0380 protein YubP (273 aa).

It belongs to the UPF0380 family.

This chain is UPF0380 protein YubP (yubP), found in Escherichia coli (strain K12).